Reading from the N-terminus, the 351-residue chain is 3-ketosteroid-9-alpha-monooxygenase, ferredoxin reductase component (351 aa).

The FAD-binding FR-type domain occupies 10–116 (SRSVILTVSA…LPPAGVFTPK (107 aa)). Residues 264–351 (ATVEVELDGE…PVTDHLKIEF (88 aa)) enclose the 2Fe-2S ferredoxin-type domain. [2Fe-2S] cluster is bound by residues cysteine 300, cysteine 305, cysteine 308, and cysteine 338.

As to quaternary structure, the two-component system 3-ketosteroid-9-alpha-monooxygenase is composed of an oxygenase component KshA and a reductase component KshB. The cofactor is FAD. [2Fe-2S] cluster is required as a cofactor.

The catalysed reaction is androsta-1,4-diene-3,17-dione + 2 reduced [2Fe-2S]-[ferredoxin] + O2 + 2 H(+) = 9alpha-hydroxyandrosta-1,4-diene-3,17-dione + 2 oxidized [2Fe-2S]-[ferredoxin] + H2O. Its pathway is steroid metabolism; cholesterol degradation. With respect to regulation, KSH activity is completely inhibited by zinc ions. KshB is specifically inhibited by Cu(2+) ions. Its function is as follows. Probably involved in the degradation of cholesterol. In vitro, catalyzes the introduction of a 9alpha-hydroxyl moiety into the ring B of 3-ketosteroid substrates such as 1,4-androstadiene-3,17-dione (ADD), 4-androstene-3,17-dione (AD), 4-androstene-17beta-ol-3-one (testosterone), 4-pregnene-3,20-dione (progesterone), 19-nor-4-androstene-3,17-dione (nordion), 1-(5alpha)-androstene-3,17-dione, 5alpha-androstane-3,17-dione and 5beta-androstane-3,17-dione. KSH has the highest activity with 3-keto-Delta4 steroid substrates. This Rhodococcus rhodochrous protein is 3-ketosteroid-9-alpha-monooxygenase, ferredoxin reductase component.